A 200-amino-acid chain; its full sequence is Ribonuclease HII (200 aa).

Residues 14–200 (ERVAGLDEAG…HRQSFTLFRD (187 aa)) enclose the RNase H type-2 domain. Residues Asp20, Glu21, and Asp112 each contribute to the a divalent metal cation site.

The protein belongs to the RNase HII family. It depends on Mn(2+) as a cofactor. Mg(2+) is required as a cofactor.

Its subcellular location is the cytoplasm. The catalysed reaction is Endonucleolytic cleavage to 5'-phosphomonoester.. Its function is as follows. Endonuclease that specifically degrades the RNA of RNA-DNA hybrids. In Salinibacter ruber (strain DSM 13855 / M31), this protein is Ribonuclease HII.